A 291-amino-acid chain; its full sequence is MACLSPSQLQKFQEDGFLVLEGFLSADECEAMQRRIDEIVAKMDVPLHCRTEFSTQEEEQLRAQGSTDYFLSSGDKIRFFFEKGVFDKQGNFLVPPEKSINKIGHALHALDPIFRCVTHSHKVQALARSLGLQMPVVVQSMYIFKQPHFGGEVAPHQDASFLYTEPLGRVLGLWIALEDAMLENGCLWFIPGSHTGGVSRRMVRTPAGSVPGTSFLGSEPIRDNSLFVPTPVLRGALVLIHGEVVHKSEQNLSDRSRQAYTFHLMEAAGTIWSPDNWLQPTPELPFPPLYT.

At Thr-55 the chain carries Phosphothreonine. Residues Lys-102, Met-141, 156–158 (HQD), and Trp-174 contribute to the 2-oxoglutarate site. 2 residues coordinate Fe cation: His-156 and Asp-158. His-246 contributes to the Fe cation binding site. 2-oxoglutarate contacts are provided by Ser-248 and Arg-257.

The protein belongs to the PhyH family. PHYHD1 subfamily. Fe cation is required as a cofactor.

2-oxoglutarate(2OG)-dependent dioxygenase that catalyzes the conversion of 2-oxoglutarate to succinate and CO(2) in an iron-dependent manner. However, does not couple 2OG turnover to the hydroxylation of acyl-coenzyme A derivatives, implying that it is not directly involved in phytanoyl coenzyme-A metabolism. Does not show detectable activity towards fatty acid CoA thioesters. This is Phytanoyl-CoA dioxygenase domain-containing protein 1 (PHYHD1) from Bos taurus (Bovine).